A 109-amino-acid chain; its full sequence is UPF0060 membrane protein ABO_1373 (109 aa).

Helical transmembrane passes span 1-21, 33-53, 63-83, and 87-107; these read MLALYTLGLFILTAVTEIVGC, PGWVLLPAAASLAMFAWLLSL, AAYGGVYVFVALLWLWGVEGV, and PWDFVGVAVALAGMGIIMFAP.

The protein belongs to the UPF0060 family.

It is found in the cell inner membrane. The polypeptide is UPF0060 membrane protein ABO_1373 (Alcanivorax borkumensis (strain ATCC 700651 / DSM 11573 / NCIMB 13689 / SK2)).